A 157-amino-acid chain; its full sequence is Ribosome maturation factor RimP (157 aa).

It belongs to the RimP family.

The protein localises to the cytoplasm. Functionally, required for maturation of 30S ribosomal subunits. The protein is Ribosome maturation factor RimP of Levilactobacillus brevis (strain ATCC 367 / BCRC 12310 / CIP 105137 / JCM 1170 / LMG 11437 / NCIMB 947 / NCTC 947) (Lactobacillus brevis).